Reading from the N-terminus, the 147-residue chain is uncharacterized protein (147 aa).

The chain crosses the membrane as a helical span at residues 63–79 (LFIVACSAVFATIAYIN).

Belongs to the FUN14 family.

It is found in the membrane. This is an uncharacterized protein from Schizosaccharomyces pombe (strain 972 / ATCC 24843) (Fission yeast).